Here is a 310-residue protein sequence, read N- to C-terminus: Ribosomal protein uL3 glutamine methyltransferase (310 aa).

The protein belongs to the protein N5-glutamine methyltransferase family. PrmB subfamily.

The enzyme catalyses L-glutaminyl-[ribosomal protein uL3] + S-adenosyl-L-methionine = N(5)-methyl-L-glutaminyl-[ribosomal protein uL3] + S-adenosyl-L-homocysteine + H(+). Functionally, methylates large ribosomal subunit protein uL3 on a specific glutamine residue. The protein is Ribosomal protein uL3 glutamine methyltransferase of Yersinia pestis.